The primary structure comprises 274 residues: Diaminopimelate epimerase (274 aa).

The substrate site is built by Asn11, Gln44, and Asn64. Residue Cys73 is the Proton donor of the active site. Substrate is bound by residues 74–75, Asn157, Asn190, and 208–209; these read GN and ER. Cys217 acts as the Proton acceptor in catalysis. A substrate-binding site is contributed by 218 to 219; it reads GS.

This sequence belongs to the diaminopimelate epimerase family. Homodimer.

The protein resides in the cytoplasm. The enzyme catalyses (2S,6S)-2,6-diaminopimelate = meso-2,6-diaminopimelate. The protein operates within amino-acid biosynthesis; L-lysine biosynthesis via DAP pathway; DL-2,6-diaminopimelate from LL-2,6-diaminopimelate: step 1/1. In terms of biological role, catalyzes the stereoinversion of LL-2,6-diaminopimelate (L,L-DAP) to meso-diaminopimelate (meso-DAP), a precursor of L-lysine and an essential component of the bacterial peptidoglycan. This is Diaminopimelate epimerase from Sodalis glossinidius (strain morsitans).